The chain runs to 311 residues: Acyl-CoA dehydrogenase IpdE2 (311 aa).

Residues Arg-206 and Gly-273 each contribute to the FAD site.

It belongs to the acyl-CoA dehydrogenase family. In terms of assembly, heterotetramer composed of 2 IpdE1 subunits and 2 IpdE2 subunits. FAD is required as a cofactor.

It carries out the reaction 3-[(3aS,4S,5R,7aS)-5-hydroxy-7a-methyl-1-oxo-octahydro-1H-inden-4-yl]propanoyl-CoA + A = (2E)-3-[(3aS,4S,5R,7aS)-5-hydroxy-7a-methyl-1-oxo-octahydro-1H-inden-4-yl]prop-2-enoyl-CoA + AH2. It participates in steroid metabolism; cholesterol degradation. Functionally, involved in cholesterol degradation. Catalyzes the dehydrogenation of 5OH-HIP-CoA to 5OH-HIPE-CoA. The protein is Acyl-CoA dehydrogenase IpdE2 of Mycolicibacterium smegmatis (strain ATCC 700084 / mc(2)155) (Mycobacterium smegmatis).